Here is a 452-residue protein sequence, read N- to C-terminus: Phosphoglucosamine mutase (452 aa).

Serine 104 functions as the Phosphoserine intermediate in the catalytic mechanism. Residues serine 104, aspartate 245, aspartate 247, and aspartate 249 each contribute to the Mg(2+) site. Serine 104 carries the phosphoserine modification.

The protein belongs to the phosphohexose mutase family. Mg(2+) serves as cofactor. Post-translationally, activated by phosphorylation.

The enzyme catalyses alpha-D-glucosamine 1-phosphate = D-glucosamine 6-phosphate. Catalyzes the conversion of glucosamine-6-phosphate to glucosamine-1-phosphate. The sequence is that of Phosphoglucosamine mutase from Gluconacetobacter diazotrophicus (strain ATCC 49037 / DSM 5601 / CCUG 37298 / CIP 103539 / LMG 7603 / PAl5).